Here is a 334-residue protein sequence, read N- to C-terminus: Holliday junction branch migration complex subunit RuvB (334 aa).

The segment at A4 to Y184 is large ATPase domain (RuvB-L). ATP contacts are provided by residues I23, R24, G65, K68, T69, T70, E131–Y133, R174, Y184, and R221. T69 is a Mg(2+) binding site. Residues P185–N255 are small ATPAse domain (RuvB-S). Positions A258–E334 are head domain (RuvB-H). Positions 294, 313, and 318 each coordinate DNA.

The protein belongs to the RuvB family. As to quaternary structure, homohexamer. Forms an RuvA(8)-RuvB(12)-Holliday junction (HJ) complex. HJ DNA is sandwiched between 2 RuvA tetramers; dsDNA enters through RuvA and exits via RuvB. An RuvB hexamer assembles on each DNA strand where it exits the tetramer. Each RuvB hexamer is contacted by two RuvA subunits (via domain III) on 2 adjacent RuvB subunits; this complex drives branch migration. In the full resolvosome a probable DNA-RuvA(4)-RuvB(12)-RuvC(2) complex forms which resolves the HJ.

It localises to the cytoplasm. The enzyme catalyses ATP + H2O = ADP + phosphate + H(+). The RuvA-RuvB-RuvC complex processes Holliday junction (HJ) DNA during genetic recombination and DNA repair, while the RuvA-RuvB complex plays an important role in the rescue of blocked DNA replication forks via replication fork reversal (RFR). RuvA specifically binds to HJ cruciform DNA, conferring on it an open structure. The RuvB hexamer acts as an ATP-dependent pump, pulling dsDNA into and through the RuvAB complex. RuvB forms 2 homohexamers on either side of HJ DNA bound by 1 or 2 RuvA tetramers; 4 subunits per hexamer contact DNA at a time. Coordinated motions by a converter formed by DNA-disengaged RuvB subunits stimulates ATP hydrolysis and nucleotide exchange. Immobilization of the converter enables RuvB to convert the ATP-contained energy into a lever motion, pulling 2 nucleotides of DNA out of the RuvA tetramer per ATP hydrolyzed, thus driving DNA branch migration. The RuvB motors rotate together with the DNA substrate, which together with the progressing nucleotide cycle form the mechanistic basis for DNA recombination by continuous HJ branch migration. Branch migration allows RuvC to scan DNA until it finds its consensus sequence, where it cleaves and resolves cruciform DNA. This is Holliday junction branch migration complex subunit RuvB from Yersinia pestis bv. Antiqua (strain Angola).